A 313-amino-acid polypeptide reads, in one-letter code: MNTFSQVWVFSDTPSRLPELMNGAQALANQINAFVLNDADGAQAIQLGANHVWKLNGKPDDRMIEDYAGVMADTIRQHGADGLVLLPNTRRGKLLAAKLGYRLKAAVSNDASTVSVQDGKATVKHMVYGGLAIGEERIATPYAVLTISSGTFDAAQPDASRTGETHTVEWQAPAVAITRTATQARQSNSVDLDKARLVVSVGRGIGSKENIALAEQLCKAIGAELACSRPVAENEKWMEHERYVGISNLMLKPELYLAVGISGQIQHMVGANASQTIFAINKDKNAPIFQYADYGIVGDAVKILPALTAALAR.

255-283 (LYLAVGISGQIQHMVGANASQTIFAINKD) lines the FAD pocket.

This sequence belongs to the ETF alpha-subunit/FixB family. In terms of assembly, heterodimer of FixA and FixB.

The protein operates within amine and polyamine metabolism; carnitine metabolism. Functionally, required for anaerobic carnitine reduction. May bring reductant to CaiA. In Shigella flexneri, this protein is Protein FixB.